The chain runs to 85 residues: UPF0473 protein CPR_1590 (85 aa).

Belongs to the UPF0473 family.

The polypeptide is UPF0473 protein CPR_1590 (Clostridium perfringens (strain SM101 / Type A)).